The sequence spans 346 residues: Histidinol-phosphate aminotransferase (346 aa).

N6-(pyridoxal phosphate)lysine is present on K209.

It belongs to the class-II pyridoxal-phosphate-dependent aminotransferase family. Histidinol-phosphate aminotransferase subfamily. Homodimer. Requires pyridoxal 5'-phosphate as cofactor.

The enzyme catalyses L-histidinol phosphate + 2-oxoglutarate = 3-(imidazol-4-yl)-2-oxopropyl phosphate + L-glutamate. Its pathway is amino-acid biosynthesis; L-histidine biosynthesis; L-histidine from 5-phospho-alpha-D-ribose 1-diphosphate: step 7/9. This is Histidinol-phosphate aminotransferase from Vibrio vulnificus (strain CMCP6).